The primary structure comprises 93 residues: RNA-binding protein Hfq (93 aa).

One can recognise a Sm domain in the interval 11-71 (DVFLNHVRKS…ISTVMPGAPI (61 aa)).

The protein belongs to the Hfq family. As to quaternary structure, homohexamer.

RNA chaperone that binds small regulatory RNA (sRNAs) and mRNAs to facilitate mRNA translational regulation in response to envelope stress, environmental stress and changes in metabolite concentrations. Also binds with high specificity to tRNAs. The sequence is that of RNA-binding protein Hfq from Granulibacter bethesdensis (strain ATCC BAA-1260 / CGDNIH1).